Reading from the N-terminus, the 211-residue chain is Protein-L-isoaspartate O-methyltransferase (211 aa).

The active site involves Ser-60.

The protein belongs to the methyltransferase superfamily. L-isoaspartyl/D-aspartyl protein methyltransferase family.

The protein resides in the cytoplasm. The enzyme catalyses [protein]-L-isoaspartate + S-adenosyl-L-methionine = [protein]-L-isoaspartate alpha-methyl ester + S-adenosyl-L-homocysteine. Catalyzes the methyl esterification of L-isoaspartyl residues in peptides and proteins that result from spontaneous decomposition of normal L-aspartyl and L-asparaginyl residues. It plays a role in the repair and/or degradation of damaged proteins. This chain is Protein-L-isoaspartate O-methyltransferase, found in Pseudomonas fluorescens (strain Pf0-1).